The primary structure comprises 240 residues: 7-cyano-7-deazaguanine synthase (240 aa).

Residue 18–28 (FSGGQDSTTCL) participates in ATP binding. Zn(2+) is bound by residues Cys197, Cys206, Cys209, and Cys212.

It belongs to the QueC family. Requires Zn(2+) as cofactor.

It carries out the reaction 7-carboxy-7-deazaguanine + NH4(+) + ATP = 7-cyano-7-deazaguanine + ADP + phosphate + H2O + H(+). It participates in purine metabolism; 7-cyano-7-deazaguanine biosynthesis. Catalyzes the ATP-dependent conversion of 7-carboxy-7-deazaguanine (CDG) to 7-cyano-7-deazaguanine (preQ(0)). The polypeptide is 7-cyano-7-deazaguanine synthase (Shewanella putrefaciens (strain CN-32 / ATCC BAA-453)).